Here is a 295-residue protein sequence, read N- to C-terminus: Phosphoribosylaminoimidazole-succinocarboxamide synthase (295 aa).

Belongs to the SAICAR synthetase family.

The catalysed reaction is 5-amino-1-(5-phospho-D-ribosyl)imidazole-4-carboxylate + L-aspartate + ATP = (2S)-2-[5-amino-1-(5-phospho-beta-D-ribosyl)imidazole-4-carboxamido]succinate + ADP + phosphate + 2 H(+). Its pathway is purine metabolism; IMP biosynthesis via de novo pathway; 5-amino-1-(5-phospho-D-ribosyl)imidazole-4-carboxamide from 5-amino-1-(5-phospho-D-ribosyl)imidazole-4-carboxylate: step 1/2. The protein is Phosphoribosylaminoimidazole-succinocarboxamide synthase of Halorhodospira halophila (strain DSM 244 / SL1) (Ectothiorhodospira halophila (strain DSM 244 / SL1)).